We begin with the raw amino-acid sequence, 225 residues long: Ribonuclease 3 (225 aa).

The region spanning 5–127 is the RNase III domain; the sequence is LERLQRQIGY…IIGAISLDSD (123 aa). E40 serves as a coordination point for Mg(2+). Residue D44 is part of the active site. Positions 113 and 116 each coordinate Mg(2+). The active site involves E116. The region spanning 154–224 is the DRBM domain; sequence DPKTRLQEYL…AEKILQLLEM (71 aa).

This sequence belongs to the ribonuclease III family. In terms of assembly, homodimer. Mg(2+) is required as a cofactor.

Its subcellular location is the cytoplasm. The enzyme catalyses Endonucleolytic cleavage to 5'-phosphomonoester.. Its function is as follows. Digests double-stranded RNA. Involved in the processing of primary rRNA transcript to yield the immediate precursors to the large and small rRNAs (23S and 16S). Also processes some mRNAs, and tRNAs when they are encoded in the rRNA operon. In terms of biological role, CRISPR (clustered regularly interspaced short palindromic repeat) is an adaptive immune system that provides protection against mobile genetic elements (viruses, transposable elements and conjugative plasmids). CRISPR clusters contain spacers, sequences complementary to antecedent mobile elements, and target invading nucleic acids. CRISPR clusters are transcribed and processed into CRISPR RNA (crRNA). In this organism endogenous ribonuclease 3 and Cas9 are required for correct coprocessing of pre-crRNA and the trans-encoded small RNA (tracrRNA). Cas9, crRNA and tracrRNA are required for cleavage of invading DNA. Complements pre-crRNA and tracrRNA coprocessing defects in an rnc deletion in S.pyogenes strain 370. This Pasteurella multocida (strain Pm70) protein is Ribonuclease 3.